A 429-amino-acid polypeptide reads, in one-letter code: UPF0597 protein GSU1527 (429 aa).

Belongs to the UPF0597 family.

The chain is UPF0597 protein GSU1527 from Geobacter sulfurreducens (strain ATCC 51573 / DSM 12127 / PCA).